Here is a 165-residue protein sequence, read N- to C-terminus: MDEVPSSDGSKSACSGEVVMEQSVHELEEVFKKFDANGDGKISGSELADILRSLGSDVGEAEVKAMMEEADADGDGYVSLQEFVDLNNKGASVKDLKNAFKVFDRDCNGSISAAELCHTLESVGEPCTIEESKNIIHNVDKNGDGLISVEEFQTMMTSEMTDKSK.

EF-hand domains follow at residues 22 to 57 (QSVHELEEVFKKFDANGDGKISGSELADILRSLGSD), 58 to 86 (VGEAEVKAMMEEADADGDGYVSLQEFVDL), 91 to 126 (ASVKDLKNAFKVFDRDCNGSISAAELCHTLESVGEP), and 127 to 162 (CTIEESKNIIHNVDKNGDGLISVEEFQTMMTSEMTD). Positions 35, 37, 39, 41, 46, 71, 73, 75, 77, 82, 104, 106, 108, 110, 115, 140, 142, 144, and 151 each coordinate Ca(2+).

The polypeptide is Polcalcin Jun o 2 (Juniperus oxycedrus (Prickly juniper)).